The sequence spans 274 residues: Putative deoxyribonuclease TATDN1 homolog (274 aa).

4 residues coordinate a divalent metal cation: Glu-105, His-139, His-162, and Asp-208.

Belongs to the metallo-dependent hydrolases superfamily. TatD-type hydrolase family. Requires a divalent metal cation as cofactor.

It is found in the nucleus. In terms of biological role, putative deoxyribonuclease. This is Putative deoxyribonuclease TATDN1 homolog from Enterocytozoon bieneusi (strain H348) (Microsporidian parasite).